Consider the following 254-residue polypeptide: 5'/3'-nucleotidase SurE (254 aa).

Residues aspartate 9, aspartate 10, serine 40, and asparagine 93 each coordinate a divalent metal cation.

The protein belongs to the SurE nucleotidase family. A divalent metal cation is required as a cofactor.

The protein localises to the cytoplasm. It carries out the reaction a ribonucleoside 5'-phosphate + H2O = a ribonucleoside + phosphate. The catalysed reaction is a ribonucleoside 3'-phosphate + H2O = a ribonucleoside + phosphate. It catalyses the reaction [phosphate](n) + H2O = [phosphate](n-1) + phosphate + H(+). Nucleotidase with a broad substrate specificity as it can dephosphorylate various ribo- and deoxyribonucleoside 5'-monophosphates and ribonucleoside 3'-monophosphates with highest affinity to 3'-AMP. Also hydrolyzes polyphosphate (exopolyphosphatase activity) with the preference for short-chain-length substrates (P20-25). Might be involved in the regulation of dNTP and NTP pools, and in the turnover of 3'-mononucleotides produced by numerous intracellular RNases (T1, T2, and F) during the degradation of various RNAs. This Photorhabdus laumondii subsp. laumondii (strain DSM 15139 / CIP 105565 / TT01) (Photorhabdus luminescens subsp. laumondii) protein is 5'/3'-nucleotidase SurE.